Reading from the N-terminus, the 283-residue chain is NADH-ubiquinone oxidoreductase 30.4 kDa subunit, mitochondrial (283 aa).

Residues 1–17 (MASKLCRSRALASALRS) constitute a mitochondrion transit peptide. Residues 258-283 (GAGIDRKPESFKLPTPKPETKPEEKK) are disordered.

It belongs to the complex I 30 kDa subunit family. Complex I is composed of about 40 different subunits. This is a component of the iron-sulfur protein fraction.

It localises to the mitochondrion inner membrane. The catalysed reaction is a ubiquinone + NADH + 5 H(+)(in) = a ubiquinol + NAD(+) + 4 H(+)(out). Core subunit of the mitochondrial membrane respiratory chain NADH dehydrogenase (Complex I) that is believed to belong to the minimal assembly required for catalysis. Complex I functions in the transfer of electrons from NADH to the respiratory chain. The immediate electron acceptor for the enzyme is believed to be ubiquinone. The chain is NADH-ubiquinone oxidoreductase 30.4 kDa subunit, mitochondrial (nuo-31) from Neurospora crassa (strain ATCC 24698 / 74-OR23-1A / CBS 708.71 / DSM 1257 / FGSC 987).